The chain runs to 309 residues: MTLSQLKNCQIITALVTPFHADGSINFKALPELIEHLLNNHTQALLLAGTTAESPTLTHEEELELFSEVQRIVNGRVPLIAGIGTNDTRDSVDFAKEVANFGGFAAGLAIVPYYNKPTQEGLYQHFLAIAEASSLPIIIYNIPGRVVVDLHPDTLLKLAQHPNIIGVKDCTNLDHLAYIIENKPEDFLIYTGEDGQIFHAMNLGADGVISVASHTNGSEIFEMINHITNGRIKEAAQIQRRFLPKVNALFSVSSPAPVKAVLNYLGFNVGPLRLPLVACTRQEADAIINIVLDKAPKEYVTKGVLRPDY.

A pyruvate-binding site is contributed by Thr51. Tyr140 serves as the catalytic Proton donor/acceptor. Lys168 acts as the Schiff-base intermediate with substrate in catalysis. Ile209 serves as a coordination point for pyruvate.

Belongs to the DapA family. In terms of assembly, homotetramer; dimer of dimers.

Its subcellular location is the cytoplasm. It catalyses the reaction L-aspartate 4-semialdehyde + pyruvate = (2S,4S)-4-hydroxy-2,3,4,5-tetrahydrodipicolinate + H2O + H(+). Its pathway is amino-acid biosynthesis; L-lysine biosynthesis via DAP pathway; (S)-tetrahydrodipicolinate from L-aspartate: step 3/4. Its function is as follows. Catalyzes the condensation of (S)-aspartate-beta-semialdehyde [(S)-ASA] and pyruvate to 4-hydroxy-tetrahydrodipicolinate (HTPA). This is 4-hydroxy-tetrahydrodipicolinate synthase from Streptococcus uberis (strain ATCC BAA-854 / 0140J).